The primary structure comprises 469 residues: 3-isopropylmalate dehydratase large subunit (469 aa).

[4Fe-4S] cluster is bound by residues Cys350, Cys410, and Cys413.

Belongs to the aconitase/IPM isomerase family. LeuC type 1 subfamily. In terms of assembly, heterodimer of LeuC and LeuD. The cofactor is [4Fe-4S] cluster.

The catalysed reaction is (2R,3S)-3-isopropylmalate = (2S)-2-isopropylmalate. Its pathway is amino-acid biosynthesis; L-leucine biosynthesis; L-leucine from 3-methyl-2-oxobutanoate: step 2/4. In terms of biological role, catalyzes the isomerization between 2-isopropylmalate and 3-isopropylmalate, via the formation of 2-isopropylmaleate. The sequence is that of 3-isopropylmalate dehydratase large subunit from Chelativorans sp. (strain BNC1).